Here is a 176-residue protein sequence, read N- to C-terminus: ATP-dependent protease subunit HslV (176 aa).

The active site involves Thr6. Na(+) is bound by residues Ser161, Cys164, and Thr167.

Belongs to the peptidase T1B family. HslV subfamily. As to quaternary structure, a double ring-shaped homohexamer of HslV is capped on each side by a ring-shaped HslU homohexamer. The assembly of the HslU/HslV complex is dependent on binding of ATP.

Its subcellular location is the cytoplasm. The catalysed reaction is ATP-dependent cleavage of peptide bonds with broad specificity.. Allosterically activated by HslU binding. Protease subunit of a proteasome-like degradation complex believed to be a general protein degrading machinery. The chain is ATP-dependent protease subunit HslV from Pseudothermotoga lettingae (strain ATCC BAA-301 / DSM 14385 / NBRC 107922 / TMO) (Thermotoga lettingae).